Reading from the N-terminus, the 65-residue chain is Large ribosomal subunit protein bL35 (65 aa).

Belongs to the bacterial ribosomal protein bL35 family.

The sequence is that of Large ribosomal subunit protein bL35 from Agathobacter rectalis (strain ATCC 33656 / DSM 3377 / JCM 17463 / KCTC 5835 / VPI 0990) (Eubacterium rectale).